Reading from the N-terminus, the 154-residue chain is Small ribosomal subunit protein uS9 (154 aa).

Disordered regions lie at residues Met-1–Gly-33 and Pro-115–Arg-154. Basic residues predominate over residues Lys-135–Arg-154.

Belongs to the universal ribosomal protein uS9 family.

The protein is Small ribosomal subunit protein uS9 of Tropheryma whipplei (strain TW08/27) (Whipple's bacillus).